The chain runs to 35 residues: Natriuretic peptide TNPa (35 aa).

An intrachain disulfide couples cysteine 9 to cysteine 25.

Expressed by the venom gland.

It localises to the secreted. Its function is as follows. Snake venom natriuretic peptide that exhibits vasoactive and probable hypotensive activity. Is only weakly active on natriuretic peptide receptor-C (NPR3). Stimulates cGMP production through the natriuretic peptide receptor 1 (NPR1) with moderate potencies for the rat NPR1 (EC(50)=2020 nM), and very weak potencies over human NPR1 (15% activation at 10 uM). In vivo, does not impact systolic and diastolic blood pressure, as well as heart rate, when intravenously injected in conscious rabbits. Does not affect the bradycardia due to cardiac afferent stimulation (Bezold-Jarisch reflex). In Oxyuranus microlepidotus (Inland taipan), this protein is Natriuretic peptide TNPa.